We begin with the raw amino-acid sequence, 33 residues long: Gaegurin-1 (33 aa).

Cys27 and Cys33 are joined by a disulfide.

The protein belongs to the frog skin active peptide (FSAP) family. Brevinin subfamily. In terms of assembly, monomer. In terms of tissue distribution, expressed by the skin glands.

The protein localises to the secreted. Functionally, has a non-hemolytic activity. Has a broad spectrum of activity against both Gram-positive and Gram-negative bacteria, fungi and protozoa. This is Gaegurin-1 (GGN1) from Glandirana rugosa (Japanese wrinkled frog).